We begin with the raw amino-acid sequence, 99 residues long: VLHAPRVQVYSRHPAENGKQNFINCYVSGFHPPQIEVELLKNGKKIDNVEMSDLSFSKDWTFYLLVHAAFTPNDSDEYSCRVSHITLSEPKIVKWDPNK.

In terms of domain architecture, Ig-like C1-type spans 5–93; the sequence is PRVQVYSRHP…HITLSEPKIV (89 aa). A disulfide bridge connects residues Cys25 and Cys80.

This sequence belongs to the beta-2-microglobulin family. Heterodimer of an alpha chain and a beta chain. Beta-2-microglobulin is the beta-chain of major histocompatibility complex class I molecules.

It is found in the secreted. Functionally, component of the class I major histocompatibility complex (MHC). Involved in the presentation of peptide antigens to the immune system. This chain is Beta-2-microglobulin (B2M), found in Cavia porcellus (Guinea pig).